The sequence spans 392 residues: Speckle-type POZ protein-like (392 aa).

The region spanning 31 to 161 is the MATH domain; the sequence is KFSYMWTINN…DDKLTLFCEV (131 aa). The BTB domain occupies 200–267; it reads TDCSFFVRGQ…IYTGRAPNLD (68 aa).

The protein belongs to the Tdpoz family. As to quaternary structure, homodimer. Heterodimer with SPOP. Component of cullin-RING-based BCR (BTB-CUL3-RBX1) E3 ubiquitin-protein ligase complexes containing homodimeric SPOPL or the heterodimer formed by SPOP and SPOPL. Interacts with CUL3 and MACROH2A1.

Its subcellular location is the nucleus. It participates in protein modification; protein ubiquitination. Functionally, component of a cullin-RING-based BCR (BTB-CUL3-RBX1) E3 ubiquitin-protein ligase complex that mediates the ubiquitination and subsequent proteasomal degradation of target proteins, but with relatively low efficiency. Cullin-RING-based BCR (BTB-CUL3-RBX1) E3 ubiquitin-protein ligase complexes containing homodimeric SPOPL or the heterodimer formed by SPOP and SPOPL are less efficient than ubiquitin ligase complexes containing only SPOP. May function to down-regulate the activity of cullin-RING-based BCR (BTB-CUL3-RBX1) E3 ubiquitin-protein ligase complexes that contain SPOP. This chain is Speckle-type POZ protein-like (SPOPL), found in Homo sapiens (Human).